Reading from the N-terminus, the 151-residue chain is MDERELQALVERISLDVFHKPFRHRAVFNDRLRTTGGRYVLSTHHIELNRKYYEQYGEEELIQVIKHELCHYHLYLEGKGYRHRDRDFRELLQKVQAPRFCKPVLLSKTKKEHYYKCTSCRYMYVRRKALDTTRYVCGFCRGKLKKIKREC.

A SprT-like domain is found at 6-148; the sequence is LQALVERISL…FCRGKLKKIK (143 aa). Residue histidine 67 participates in Zn(2+) binding. Glutamate 68 is an active-site residue. Histidine 71 serves as a coordination point for Zn(2+).

It belongs to the SprT family. Zn(2+) serves as cofactor.

The protein resides in the cytoplasm. This is Protein SprT-like from Anoxybacillus flavithermus (strain DSM 21510 / WK1).